The chain runs to 295 residues: Small ribosomal subunit protein uS2 (295 aa).

The tract at residues 232–295 is disordered; that stretch reads RRRGTDEKPE…DEQPAAAAAE (64 aa). A compositionally biased stretch (basic and acidic residues) spans 252–287; sequence EWERELLEEPKKSDEQPAKSDELPVKTDEQPTKSDE.

This sequence belongs to the universal ribosomal protein uS2 family.

The sequence is that of Small ribosomal subunit protein uS2 from Salinispora tropica (strain ATCC BAA-916 / DSM 44818 / JCM 13857 / NBRC 105044 / CNB-440).